A 333-amino-acid polypeptide reads, in one-letter code: Aspartate carbamoyltransferase catalytic subunit (333 aa).

R61 and T62 together coordinate carbamoyl phosphate. K89 is an L-aspartate binding site. Residues R111, H144, and Q147 each contribute to the carbamoyl phosphate site. The L-aspartate site is built by R184 and R248. Carbamoyl phosphate is bound by residues G289 and P290.

The protein belongs to the aspartate/ornithine carbamoyltransferase superfamily. ATCase family. As to quaternary structure, heterododecamer (2C3:3R2) of six catalytic PyrB chains organized as two trimers (C3), and six regulatory PyrI chains organized as three dimers (R2).

It carries out the reaction carbamoyl phosphate + L-aspartate = N-carbamoyl-L-aspartate + phosphate + H(+). It functions in the pathway pyrimidine metabolism; UMP biosynthesis via de novo pathway; (S)-dihydroorotate from bicarbonate: step 2/3. Catalyzes the condensation of carbamoyl phosphate and aspartate to form carbamoyl aspartate and inorganic phosphate, the committed step in the de novo pyrimidine nucleotide biosynthesis pathway. The protein is Aspartate carbamoyltransferase catalytic subunit of Trichormus variabilis (strain ATCC 29413 / PCC 7937) (Anabaena variabilis).